A 346-amino-acid chain; its full sequence is Ribosomal RNA small subunit methyltransferase H (346 aa).

S-adenosyl-L-methionine-binding positions include 46 to 48, Asp63, Phe90, Asp113, and Gln120; that span reads GGY. Residues 270 to 346 form a disordered region; it reads GGSAGSRHMP…LPETNELARS (77 aa).

This sequence belongs to the methyltransferase superfamily. RsmH family.

It localises to the cytoplasm. It carries out the reaction cytidine(1402) in 16S rRNA + S-adenosyl-L-methionine = N(4)-methylcytidine(1402) in 16S rRNA + S-adenosyl-L-homocysteine + H(+). Functionally, specifically methylates the N4 position of cytidine in position 1402 (C1402) of 16S rRNA. In Brucella abortus (strain S19), this protein is Ribosomal RNA small subunit methyltransferase H.